A 775-amino-acid chain; its full sequence is E3 ubiquitin-protein ligase UHRF1 (775 aa).

Positions 1–77 constitute a Ubiquitin-like domain; that stretch reads MWIQVRTMDG…IVQLLVRQIP (77 aa). The disordered stretch occupies residues 81 to 128; it reads PTKDKECGISDADSGCGSGQGESDKNSSCGEGATDVDGQPAGINSENV. Tudor-like stretches follow at residues 131-207 and 214-283; these read SLYK…LRAR and DLKV…IEEP. The tract at residues 293-301 is linker; it reads PQKRQNGPE. A PHD-type zinc finger spans residues 299-366; the sequence is GPECKHCKDN…DWYCPDCRND (68 aa). Histone H3R2me0 binding stretches follow at residues 333–337 and 353–355; these read CDECD and PQD. Positions 419 to 582 constitute a YDG domain; that stretch reads GPIPGVPVGT…FLVWRYLLRR (164 aa). Residues 445–446 are required to promote base flipping; the sequence is HV. Residues 463 to 464 and Asp469 contribute to the DNA site; that span reads AG. Required for formation of a 5-methylcytosine-binding pocket regions lie at residues 466–469 and 478–481; these read YEDD and YTGS. Basic and acidic residues predominate over residues 616-628; that stretch reads ASKEREKENKTED. Positions 616–655 are disordered; the sequence is ASKEREKENKTEDELSESPSKGKRKRNSAGSGLSDAKSTP. The segment at 706–745 adopts an RING-type zinc-finger fold; the sequence is CICCQEVVYEPITTECHHNICKGCLDRSFKALVHNCPACR.

It localises to the nucleus. It catalyses the reaction S-ubiquitinyl-[E2 ubiquitin-conjugating enzyme]-L-cysteine + [acceptor protein]-L-lysine = [E2 ubiquitin-conjugating enzyme]-L-cysteine + N(6)-ubiquitinyl-[acceptor protein]-L-lysine.. The protein operates within protein modification; protein ubiquitination. In terms of biological role, multidomain protein that acts as a key epigenetic regulator by bridging DNA methylation and chromatin modification. Specifically recognizes and binds hemimethylated DNA at replication forks via its YDG domain and recruits dnmt1 methyltransferase to ensure faithful propagation of the DNA methylation patterns through DNA replication. In addition to its role in maintenance of DNA methylation, also plays a key role in chromatin modification: through its tudor-like regions and PHD-type zinc fingers, specifically recognizes and binds histone H3 trimethylated at 'Lys-9' (H3K9me3) and unmethylated at 'Arg-2' (H3R2me0), respectively, and recruits chromatin proteins. Enriched in pericentric heterochromatin where it recruits different chromatin modifiers required for this chromatin replication. Also localizes to euchromatic regions where it negatively regulates transcription possibly by impacting DNA methylation and histone modifications. Has E3 ubiquitin-protein ligase activity by mediating the ubiquitination of target proteins. However, it is still unclear how E3 ubiquitin-protein ligase activity is related to its role in chromatin in vivo. The polypeptide is E3 ubiquitin-protein ligase UHRF1 (uhrf1) (Xenopus tropicalis (Western clawed frog)).